The chain runs to 318 residues: Malonyl CoA-acyl carrier protein transacylase, mitochondrial (318 aa).

It belongs to the FabD family.

It localises to the mitochondrion. It catalyses the reaction holo-[ACP] + malonyl-CoA = malonyl-[ACP] + CoA. Its pathway is lipid metabolism; fatty acid biosynthesis. Functionally, involved in biosynthesis of fatty acids in mitochondria. This Schizosaccharomyces pombe (strain 972 / ATCC 24843) (Fission yeast) protein is Malonyl CoA-acyl carrier protein transacylase, mitochondrial (mct1).